A 426-amino-acid chain; its full sequence is 4-hydroxy-3-methylbut-2-en-1-yl diphosphate synthase (flavodoxin) (426 aa).

C320, C323, C366, and E373 together coordinate [4Fe-4S] cluster.

The protein belongs to the IspG family. It depends on [4Fe-4S] cluster as a cofactor.

The catalysed reaction is (2E)-4-hydroxy-3-methylbut-2-enyl diphosphate + oxidized [flavodoxin] + H2O + 2 H(+) = 2-C-methyl-D-erythritol 2,4-cyclic diphosphate + reduced [flavodoxin]. It participates in isoprenoid biosynthesis; isopentenyl diphosphate biosynthesis via DXP pathway; isopentenyl diphosphate from 1-deoxy-D-xylulose 5-phosphate: step 5/6. Converts 2C-methyl-D-erythritol 2,4-cyclodiphosphate (ME-2,4cPP) into 1-hydroxy-2-methyl-2-(E)-butenyl 4-diphosphate. This is 4-hydroxy-3-methylbut-2-en-1-yl diphosphate synthase (flavodoxin) from Wolbachia sp. subsp. Drosophila simulans (strain wRi).